The chain runs to 1040 residues: Multidrug resistance protein MdtB (1040 aa).

A run of 12 helical transmembrane segments spans residues 16–36 (FIMR…AGII), 347–367 (LMMA…NIPA), 369–389 (IIPG…MVFL), 396–416 (LTLM…IVVI), 440–460 (IGFT…PLLF), 472–492 (FAIT…TLTP), 537–557 (WLTL…WVFI), 863–883 (LGST…VLGI), 888–908 (FIHP…ALLA), 911–931 (IAGS…IGIV), 968–988 (ILMT…STGV), and 998–1018 (IGMV…TPVI).

This sequence belongs to the resistance-nodulation-cell division (RND) (TC 2.A.6) family. MdtB subfamily. In terms of assembly, part of a tripartite efflux system composed of MdtA, MdtB and MdtC. MdtB forms a heteromultimer with MdtC.

The protein localises to the cell inner membrane. In terms of biological role, the MdtABC tripartite complex confers resistance against novobiocin and deoxycholate. In Escherichia coli O9:H4 (strain HS), this protein is Multidrug resistance protein MdtB.